Consider the following 175-residue polypeptide: Adenine phosphoribosyltransferase (175 aa).

The protein belongs to the purine/pyrimidine phosphoribosyltransferase family. As to quaternary structure, homodimer.

Its subcellular location is the cytoplasm. The enzyme catalyses AMP + diphosphate = 5-phospho-alpha-D-ribose 1-diphosphate + adenine. The protein operates within purine metabolism; AMP biosynthesis via salvage pathway; AMP from adenine: step 1/1. In terms of biological role, catalyzes a salvage reaction resulting in the formation of AMP, that is energically less costly than de novo synthesis. The sequence is that of Adenine phosphoribosyltransferase from Thermosipho melanesiensis (strain DSM 12029 / CIP 104789 / BI429).